A 1501-amino-acid chain; its full sequence is Inactive protein tyrosine kinase pTKL (1501 aa).

3 N-linked (GlcNAc...) asparagine glycosylation sites follow: asparagine 64, asparagine 128, and asparagine 133. Basic residues predominate over residues 204–221 (KKNKKNKKNKKKKNKKTK). Positions 204–223 (KKNKKNKKNKKKKNKKTKNT) are disordered. Residues asparagine 239, asparagine 242, asparagine 258, and asparagine 327 are each glycosylated (N-linked (GlcNAc...) asparagine). The span at 257-273 (MNISLHEKNDKKNEKKN) shows a compositional bias: basic and acidic residues. The interval 257 to 276 (MNISLHEKNDKKNEKKNEKK) is disordered. In terms of domain architecture, SAM spans 301–366 (WSLREVIQWL…LQLIKNLQVM (66 aa)). Positions 392–425 (NKNIKKGKNIKKEKKKKKEKNIKKEKKKKKKETK) are disordered. Residues 394 to 424 (NIKKGKNIKKEKKKKKEKNIKKEKKKKKKET) show a composition bias toward basic residues. The stretch at 399 to 433 (KNIKKEKKKKKEKNIKKEKKKKKKETKKFNNMDKK) forms a coiled coil. 3 N-linked (GlcNAc...) asparagine glycosylation sites follow: asparagine 448, asparagine 463, and asparagine 471. An RVxF motif 1 motif is present at residues 483 to 486 (KVSF). Residue asparagine 506 is glycosylated (N-linked (GlcNAc...) asparagine). Over residues 543-597 (QLSSPLSSPLSSPSPSSSPSSSPSSSPSSSPSSSPSPSSSPSPSSSPSSSPSSSP) the composition is skewed to low complexity. The segment at 543 to 607 (QLSSPLSSPL…SSPPSPLSYK (65 aa)) is disordered. Asparagine 652 is a glycosylation site (N-linked (GlcNAc...) asparagine). The disordered stretch occupies residues 659–678 (IKKSKSKYNNDKKEQKKLPL). Basic and acidic residues predominate over residues 666 to 675 (YNNDKKEQKK). N-linked (GlcNAc...) asparagine glycans are attached at residues asparagine 681, asparagine 712, asparagine 737, asparagine 811, and asparagine 819. Residues 836 to 844 (QNINNFGKY) and lysine 864 contribute to the ATP site. 4 N-linked (GlcNAc...) asparagine glycosylation sites follow: asparagine 1024, asparagine 1031, asparagine 1074, and asparagine 1157. One can recognise a Protein kinase domain in the interval 1088 to 1483 (FHYQHNVLCG…HILKTISTLY (396 aa)). Residues 1238-1241 (KVLF) carry the RVxF motif 2 motif. A glycan (N-linked (GlcNAc...) asparagine) is linked at asparagine 1382.

It belongs to the protein kinase superfamily. TKL Ser/Thr protein kinase family. Interacts (via RVxF motif 1 and/or 2) with phosphatase PP1C. May interact (via SAM domain) with SERA5 (via C-terminus).

It is found in the parasitophorous vacuole. The protein localises to the host cell membrane. Its subcellular location is the host cytoplasm. The protein resides in the host cytoskeleton. The sequence is that of Inactive protein tyrosine kinase pTKL from Plasmodium falciparum (isolate 3D7).